The primary structure comprises 140 residues: Putative pre-16S rRNA nuclease (140 aa).

This sequence belongs to the YqgF nuclease family.

It is found in the cytoplasm. Could be a nuclease involved in processing of the 5'-end of pre-16S rRNA. This is Putative pre-16S rRNA nuclease from Vibrio vulnificus (strain YJ016).